Here is a 322-residue protein sequence, read N- to C-terminus: N-acetyl-gamma-glutamyl-phosphate reductase (322 aa).

The active site involves cysteine 132.

The protein belongs to the NAGSA dehydrogenase family. Type 1 subfamily.

The protein localises to the cytoplasm. The enzyme catalyses N-acetyl-L-glutamate 5-semialdehyde + phosphate + NADP(+) = N-acetyl-L-glutamyl 5-phosphate + NADPH + H(+). The protein operates within amino-acid biosynthesis; L-arginine biosynthesis; N(2)-acetyl-L-ornithine from L-glutamate: step 3/4. In terms of biological role, catalyzes the NADPH-dependent reduction of N-acetyl-5-glutamyl phosphate to yield N-acetyl-L-glutamate 5-semialdehyde. This is N-acetyl-gamma-glutamyl-phosphate reductase from Bacteroides thetaiotaomicron (strain ATCC 29148 / DSM 2079 / JCM 5827 / CCUG 10774 / NCTC 10582 / VPI-5482 / E50).